We begin with the raw amino-acid sequence, 237 residues long: Ribonuclease PH (237 aa).

Residues R86 and 124–126 (GTR) contribute to the phosphate site.

The protein belongs to the RNase PH family. Homohexameric ring arranged as a trimer of dimers.

It carries out the reaction tRNA(n+1) + phosphate = tRNA(n) + a ribonucleoside 5'-diphosphate. Phosphorolytic 3'-5' exoribonuclease that plays an important role in tRNA 3'-end maturation. Removes nucleotide residues following the 3'-CCA terminus of tRNAs; can also add nucleotides to the ends of RNA molecules by using nucleoside diphosphates as substrates, but this may not be physiologically important. Probably plays a role in initiation of 16S rRNA degradation (leading to ribosome degradation) during starvation. The polypeptide is Ribonuclease PH (Dinoroseobacter shibae (strain DSM 16493 / NCIMB 14021 / DFL 12)).